The primary structure comprises 129 residues: Small ribosomal subunit protein uS12 (129 aa).

3-methylthioaspartic acid is present on aspartate 89. The interval 110–129 (RKQGRSRYGAPRKQVVATKK) is disordered.

Belongs to the universal ribosomal protein uS12 family. As to quaternary structure, part of the 30S ribosomal subunit. Contacts proteins S8 and S17. May interact with IF1 in the 30S initiation complex.

With S4 and S5 plays an important role in translational accuracy. Functionally, interacts with and stabilizes bases of the 16S rRNA that are involved in tRNA selection in the A site and with the mRNA backbone. Located at the interface of the 30S and 50S subunits, it traverses the body of the 30S subunit contacting proteins on the other side and probably holding the rRNA structure together. The combined cluster of proteins S8, S12 and S17 appears to hold together the shoulder and platform of the 30S subunit. This chain is Small ribosomal subunit protein uS12, found in Rickettsia bellii (strain OSU 85-389).